Here is a 183-residue protein sequence, read N- to C-terminus: Ribosome rescue factor SmrB (183 aa).

In terms of domain architecture, Smr spans 98–173 (LDLHGLTQLQ…GDAALLVLIE (76 aa)).

It belongs to the SmrB family. As to quaternary structure, associates with collided ribosomes, but not with correctly translating polysomes.

Its function is as follows. Acts as a ribosome collision sensor. Detects stalled/collided disomes (pairs of ribosomes where the leading ribosome is stalled and a second ribosome has collided with it) and endonucleolytically cleaves mRNA at the 5' boundary of the stalled ribosome. Stalled/collided disomes form a new interface (primarily via the 30S subunits) that binds SmrB. Cleaved mRNA becomes available for tmRNA ligation, leading to ribosomal subunit dissociation and rescue of stalled ribosomes. This chain is Ribosome rescue factor SmrB, found in Escherichia coli O17:K52:H18 (strain UMN026 / ExPEC).